Here is a 463-residue protein sequence, read N- to C-terminus: Increased DNA methylation 3 (463 aa).

The segment covering 169-182 has biased composition (basic and acidic residues); the sequence is NLDESRETEQDCSR. Disordered stretches follow at residues 169–199 and 300–347; these read NLDE…DYNS and RRFK…TTGT. A compositionally biased stretch (polar residues) spans 184 to 199; sequence GDATANGVVTNEDYNS. A compositionally biased stretch (basic residues) spans 300–310; the sequence is RRFKNSSKKAT.

In terms of assembly, interacts with MBD7 (via C-terminus), IDM1 and IDM2. Part of a complex made of MBD7, IDM1, IDM2 and IDM3.

It is found in the nucleus. Acts as an anti-silencing factor that prevents DNA hypermethylation and gene repression. The chain is Increased DNA methylation 3 from Arabidopsis thaliana (Mouse-ear cress).